Consider the following 919-residue polypeptide: Chitin synthase 1 (919 aa).

Disordered regions lie at residues 1–69 (MSYD…SFQT) and 109–134 (NLAS…ALGP). Residues 11–30 (GQGRDYARQQRQQRSYQLSD) show a composition bias toward low complexity. N-linked (GlcNAc...) asparagine glycosylation is found at N187 and N556. The next 7 helical transmembrane spans lie at 594 to 614 (IVLL…SIII), 630 to 650 (LVVF…FLVL), 668 to 688 (IASF…SLWL), 713 to 733 (VLIA…ILYA), 742 to 762 (FPQY…YAFC), 843 to 863 (LVAF…NVNG), and 887 to 919 (IILW…FRKT).

It belongs to the chitin synthase family. Class III subfamily.

The protein resides in the cell membrane. Its subcellular location is the cytoplasmic vesicle membrane. The enzyme catalyses [(1-&gt;4)-N-acetyl-beta-D-glucosaminyl](n) + UDP-N-acetyl-alpha-D-glucosamine = [(1-&gt;4)-N-acetyl-beta-D-glucosaminyl](n+1) + UDP + H(+). Polymerizes chitin, a structural polymer of the cell wall and septum, by transferring the sugar moiety of UDP-GlcNAc to the non-reducing end of the growing chitin polymer. This Mycosarcoma maydis (Corn smut fungus) protein is Chitin synthase 1.